The sequence spans 100 residues: Putative protein adenylyltransferase MJ0604 (100 aa).

Residues 29–43 (GSYARGDYTEESDID) carry the GSX(10)DXD motif motif. 2 residues coordinate Mg(2+): D41 and D43.

This sequence belongs to the MntA antitoxin family. Mg(2+) serves as cofactor.

The catalysed reaction is L-tyrosyl-[protein] + ATP = O-(5'-adenylyl)-L-tyrosyl-[protein] + diphosphate. The enzyme catalyses O-(5'-adenylyl)-L-tyrosyl-[protein] + ATP = O-[5'-(adenylyl-(5'-&gt;3')-adenylyl)]-L-tyrosyl-[protein] + diphosphate. In terms of biological role, putative antitoxin component of a putative type VII toxin-antitoxin (TA) system. Its cognate toxin might be MJ0605, which it might AMPylate. The protein is Putative protein adenylyltransferase MJ0604 of Methanocaldococcus jannaschii (strain ATCC 43067 / DSM 2661 / JAL-1 / JCM 10045 / NBRC 100440) (Methanococcus jannaschii).